Reading from the N-terminus, the 68-residue chain is Large ribosomal subunit protein uL29 (68 aa).

The protein belongs to the universal ribosomal protein uL29 family.

This chain is Large ribosomal subunit protein uL29 (rpl29), found in Thermoplasma acidophilum (strain ATCC 25905 / DSM 1728 / JCM 9062 / NBRC 15155 / AMRC-C165).